The primary structure comprises 359 residues: Type-1 angiotensin II receptor (359 aa).

The Extracellular segment spans residues 1–25; that stretch reads MILNSSTEDGIKRIQDDCPKAGRHN. N-linked (GlcNAc...) asparagine glycosylation occurs at asparagine 4. Residues glutamine 15 and aspartate 17 each coordinate angiotensin II. 2 disulfide bridges follow: cysteine 18-cysteine 274 and cysteine 101-cysteine 180. The chain crosses the membrane as a helical span at residues 26–55; it reads YIFIMIPTLYSIIFVVGIFGNSLVVIVIYF. The Cytoplasmic segment spans residues 56 to 61; the sequence is YMKLKT. A helical membrane pass occupies residues 62 to 89; sequence VASVFLLNLALADLCFLLTLPLWAVYTA. At 90–98 the chain is on the extracellular side; that stretch reads MEYRWPFGN. The helical transmembrane segment at 99-125 threads the bilayer; the sequence is YLCKIASASVSFNLYASVFLLTCLSID. Residues 126–141 lie on the Cytoplasmic side of the membrane; sequence RYLAIVHPMKSRLRRT. A helical transmembrane segment spans residues 142–165; sequence MLVAKVTCIIIWLLAGLASLPTII. The Extracellular segment spans residues 166 to 190; the sequence is HRNVFFIENTNITVCAFHYESQNST. Arginine 167 is a binding site for angiotensin II. Asparagine 176 is a glycosylation site (N-linked (GlcNAc...) asparagine). Angiotensin II-binding residues include phenylalanine 182, histidine 183, and tyrosine 184. N-linked (GlcNAc...) asparagine glycosylation is present at asparagine 188. A helical transmembrane segment spans residues 191-216; it reads LPVGLGLTKNILGFLFPFLIILTSYT. Angiotensin II is bound at residue lysine 199. Residues 217 to 239 are Cytoplasmic-facing; the sequence is LIWKTLKKAYEIQKNKPRKDDIF. The helical transmembrane segment at 240 to 268 threads the bilayer; that stretch reads KIILAIVLFFFFSWVPHQIFTFMDVLIQL. Topologically, residues 269–278 are extracellular; the sequence is GLIRDCKIED. The chain crosses the membrane as a helical span at residues 279-304; that stretch reads IVDTAMPITICLAYFNNCLNPLFYGF. The Cytoplasmic portion of the chain corresponds to 305-359; the sequence is LGKKFKKYFLQLLKYIPPKAKSHSNLSTKMSTLSYRPSENGNSSTKKPAPCIEVE. Over residues 336 to 350 the composition is skewed to polar residues; sequence TLSYRPSENGNSSTK. Positions 336–359 are disordered; that stretch reads TLSYRPSENGNSSTKKPAPCIEVE. A lipid anchor (S-palmitoyl cysteine) is attached at cysteine 355.

This sequence belongs to the G-protein coupled receptor 1 family. In terms of assembly, interacts with MAS1. Interacts with ARRB1. Interacts with FLNA (via filamin repeat 21); increases PKA-mediated phosphorylation of FLNA. In terms of processing, C-terminal Ser or Thr residues may be phosphorylated. Adrenal medulla, cortex and kidney.

The protein resides in the cell membrane. Receptor for angiotensin II, a vasoconstricting peptide, which acts as a key regulator of blood pressure and sodium retention by the kidney. The activated receptor in turn couples to G-alpha proteins G(q) (GNAQ, GNA11, GNA14 or GNA15) and thus activates phospholipase C and increases the cytosolic Ca(2+) concentrations, which in turn triggers cellular responses such as stimulation of protein kinase C. This is Type-1 angiotensin II receptor (AGTR1) from Bos taurus (Bovine).